We begin with the raw amino-acid sequence, 203 residues long: Ras-related protein Rab-7a (203 aa).

GTP contacts are provided by residues 15–22 (GDSGVGKT), 34–40 (SNQYKAT), 63–67 (DTAGQ), 125–128 (NKID), and 157–158 (AK). The short motif at 37 to 45 (YKATIGADF) is the Effector region element. S-geranylgeranyl cysteine attachment occurs at residues Cys-202 and Cys-203.

Belongs to the small GTPase superfamily. Rab family.

The protein resides in the late endosome membrane. It is found in the lysosome membrane. The protein localises to the cytoplasmic vesicle. Its subcellular location is the autophagosome membrane. It localises to the lipid droplet. The enzyme catalyses GTP + H2O = GDP + phosphate + H(+). Small GTPase which cycles between active GTP-bound and inactive GDP-bound states. In its active state, binds to a variety of effector proteins playing a key role in the regulation of endo-lysosomal trafficking. Governs early-to-late endosomal maturation, microtubule minus-end as well as plus-end directed endosomal migration and positioning, and endosome-lysosome transport through different protein-protein interaction cascades. Involved in lipophagy, a cytosolic lipase-independent autophagic pathway. The polypeptide is Ras-related protein Rab-7a (rab7A) (Dictyostelium discoideum (Social amoeba)).